The chain runs to 357 residues: Peptide chain release factor 1 (357 aa).

Q235 is modified (N5-methylglutamine). The disordered stretch occupies residues K285–E305.

The protein belongs to the prokaryotic/mitochondrial release factor family. Post-translationally, methylated by PrmC. Methylation increases the termination efficiency of RF1.

Its subcellular location is the cytoplasm. Peptide chain release factor 1 directs the termination of translation in response to the peptide chain termination codons UAG and UAA. In Chlamydia pneumoniae (Chlamydophila pneumoniae), this protein is Peptide chain release factor 1 (prfA).